Reading from the N-terminus, the 407-residue chain is MKYDNLLDRFIKYVKVNTRSDPDSETTPSTESQEAFALTILKPEMEAIGLQDVHYNPVNGYLIGTLPANNPTLTRKIGFIAHMDTADFNAENVNPQIIDNYQGEDITLGSSNYKLDPKAFPNLNNYIGQTLITTDGTTLLGADDKSGIAEIMTAIEFLTSQPQIEHCDIKVAFGPDEEIGVGADKFEVADFEVDFAYTMDGGPLGELQYETFSAAALEVTFLGRNVHPGTAKDQMINALQLAIDFHEKLPAKERPEYTDGYQGFYHLTGLTGTVEEARASYIIRDFEEASFEARKVKVENIAQSMNAQLGTKRVLVELNDQYYNMKKVIEKDMTAIELAKEVMEELTIKPVIEPIRGGTDGSKISFMGIPTPNIFAGGENMHGRFEFVSLQTMERAVDVIIGLVCKA.

Residue His-82 participates in Zn(2+) binding. The active site involves Asp-84. Asp-143 contacts Zn(2+). Glu-177 serves as the catalytic Proton acceptor. The Zn(2+) site is built by Glu-178, Asp-200, and His-382.

It belongs to the peptidase M20B family. The cofactor is Zn(2+).

Its subcellular location is the cytoplasm. The catalysed reaction is Release of the N-terminal residue from a tripeptide.. In terms of biological role, cleaves the N-terminal amino acid of tripeptides. The polypeptide is Peptidase T (Streptococcus pyogenes serotype M6 (strain ATCC BAA-946 / MGAS10394)).